Reading from the N-terminus, the 111-residue chain is Large ribosomal subunit protein uL22 (111 aa).

This sequence belongs to the universal ribosomal protein uL22 family. In terms of assembly, part of the 50S ribosomal subunit.

This protein binds specifically to 23S rRNA; its binding is stimulated by other ribosomal proteins, e.g. L4, L17, and L20. It is important during the early stages of 50S assembly. It makes multiple contacts with different domains of the 23S rRNA in the assembled 50S subunit and ribosome. Functionally, the globular domain of the protein is located near the polypeptide exit tunnel on the outside of the subunit, while an extended beta-hairpin is found that lines the wall of the exit tunnel in the center of the 70S ribosome. The polypeptide is Large ribosomal subunit protein uL22 (Xanthomonas euvesicatoria pv. vesicatoria (strain 85-10) (Xanthomonas campestris pv. vesicatoria)).